A 193-amino-acid polypeptide reads, in one-letter code: Segregation and condensation protein B (193 aa).

The protein belongs to the ScpB family. As to quaternary structure, homodimer. Homodimerization may be required to stabilize the binding of ScpA to the Smc head domains. Component of a cohesin-like complex composed of ScpA, ScpB and the Smc homodimer, in which ScpA and ScpB bind to the head domain of Smc. The presence of the three proteins is required for the association of the complex with DNA.

Its subcellular location is the cytoplasm. Functionally, participates in chromosomal partition during cell division. May act via the formation of a condensin-like complex containing Smc and ScpA that pull DNA away from mid-cell into both cell halves. The polypeptide is Segregation and condensation protein B (Streptococcus thermophilus (strain ATCC BAA-250 / LMG 18311)).